Consider the following 188-residue polypeptide: Ribosome-recycling factor (188 aa).

The protein belongs to the RRF family.

The protein localises to the cytoplasm. Responsible for the release of ribosomes from messenger RNA at the termination of protein biosynthesis. May increase the efficiency of translation by recycling ribosomes from one round of translation to another. In Anaeromyxobacter dehalogenans (strain 2CP-1 / ATCC BAA-258), this protein is Ribosome-recycling factor.